An 88-amino-acid chain; its full sequence is Gene 85 protein (88 aa).

The sequence is that of Gene 85 protein (85) from Mycobacterium phage L5 (Mycobacteriophage L5).